Reading from the N-terminus, the 94-residue chain is Trp operon repressor homolog (94 aa).

A DNA-binding region spans residues 58–81 (QREIAEKYGVSIAQITRGSNALKG).

Belongs to the TrpR family. In terms of assembly, homodimer.

Its subcellular location is the cytoplasm. This protein is an aporepressor. When complexed with L-tryptophan it binds the operator region of the trp operon and prevents the initiation of transcription. The polypeptide is Trp operon repressor homolog (Chlamydia trachomatis serovar A (strain ATCC VR-571B / DSM 19440 / HAR-13)).